Here is a 279-residue protein sequence, read N- to C-terminus: Putative pyruvate, phosphate dikinase regulatory protein (279 aa).

156-163 (GVSRTSKT) contributes to the ADP binding site.

The protein belongs to the pyruvate, phosphate/water dikinase regulatory protein family. PDRP subfamily.

It carries out the reaction N(tele)-phospho-L-histidyl/L-threonyl-[pyruvate, phosphate dikinase] + ADP = N(tele)-phospho-L-histidyl/O-phospho-L-threonyl-[pyruvate, phosphate dikinase] + AMP + H(+). The catalysed reaction is N(tele)-phospho-L-histidyl/O-phospho-L-threonyl-[pyruvate, phosphate dikinase] + phosphate + H(+) = N(tele)-phospho-L-histidyl/L-threonyl-[pyruvate, phosphate dikinase] + diphosphate. Bifunctional serine/threonine kinase and phosphorylase involved in the regulation of the pyruvate, phosphate dikinase (PPDK) by catalyzing its phosphorylation/dephosphorylation. In Maricaulis maris (strain MCS10) (Caulobacter maris), this protein is Putative pyruvate, phosphate dikinase regulatory protein.